A 2499-amino-acid chain; its full sequence is MEKPTVHVDVDPQSPFVLQLQKSFPQFEIVAQQVTPNDHANARAFSHLASKLIEHEIPTSVTILDIGSAPARRMYSEHKYHCVCPMRSPEDPDRLMNYASRLADKAGEITNKRLHDKLADLKSVLESPDAETGTICFHNDVICRTTAEVSVMQNVYINAPSTIYHQALKGVRKLYWIGFDTTQFMFSSMAGSYPSYNTNWADERVLEARNIGLCSTKLREGTMGKLSTFRKKALKPGTNVYFSVGSTLYPENRADLQSWHLPSVFHLKGKQSFTCRCDTAVNCEGYVVKKITISPGITGRVNRYTVTNNSEGFLLCKITDTVKGERVSFPVCTYIPPSICDQMTGILATDIQPEDAQKLLVGLNQRIVVNGKTNRNTNTMQNYLLPAVATGLSKWAKERKADCSDEKPLNVRERKLAFGCLWAFKTKKIHSFYRPPGTQTIVKVAAEFSAFPMSSVWTTSLPMSLRQKVKLLLVKKTNKPVVTITDTAVKNAQEAYNEAVETAEAEEKAKALPPLKPTAPPVAEDVKCEVTDLVDDAGAALVETPRGKIKIIPQEGDVRIGSYTVISPAAVLRNQQLEPIHELAEQVKIITHGGRTGRYSVEPYDAKVLLPTGCPMSWQHFAALSESATLVYNEREFLNRKLHHIATKGAAKNTEEEQYKVCKAKDTDHEYVYDVDARKCVKREHAQGLVLVGELTNPPYHELAYEGLRTRPAAPYHIETLGVIGTPGSGKSAIIKSTVTLKDLVTSGKKENCKEIENDVQKMRGMTIATRTVDSVLLNGWKKAVDVLYVDEAFACHAGTLMALIAIVKPRRKVVLCGDPKQWPFFNLMQLKVNFNNPERDLCTSTHYKYISRRCTQPVTAIVSTLHYDGKMRTTNPCKRAIEIDVNGSTKPKKGDIVLTCFRGWVKQGQIDYPGPGGHDRAASQGLTRRGVYAVRQKVNENPLYAEKSEHVNVLLTRTEDRIVWKTLQGDPWIKYLTNVPKGNFTATLEEWQAEHEDIMKAINSTSTVSDPFASKVNTCWAKAIIPILRTAGIELTFEQWEDLFPQFRNDQPYSVMYALDVICTKMFGMDLSSGIFSRPEIPLTFHPADVGRVRAHWDNSPGGQKFGYNKAVIPTCKKYPVYLRAGKGDQILPIYGRVSVPSARNNLVPLNRNLPHSLTASLQKKEAAPLHKFLNQLPGHSMLLVSKETCYCVSKRITWVAPLGVRGADHNHDLHFGFPPLSRYDLVVVNMGQPYRFHHYQQCEEHAGLMRTLARSALNCLKPGGTLALKAYGFADSNSEDVVLSLARKFVRASAVRPSCTQFNTEMFFVFRQLDNDRERQFTQHHLNLAVSNIFDNYKDGSGAAPSYRVKRMNIADCTEEAVVNAANARGKPGDGVCRAIFKKWPKSFENATTEVETAVMKPCHNKVVIHAVGPDFRKYTLEEATKLLQNAYHDVAKIVNEKGISSVAIPLLSTGIYAAGADRLDLSLRCLFTALDRTDADVTIYCLDKKWEQRIADAIRMREQVTELKDPDIEIDEGLTRVHPDSCLKDHIGYSTQYGKLYSYFEGTKFHQTAKDIAEIRALFPDVQAANEQICLYTLGEPMESIREKCPVEDSPASAPPKTIPCLCMYAMTAERICRVRSNSVTNITVCSSFPLPKYRIKNVQKIQCTKVVLFNPDVPPYIPARVYINKDEPPVTPHTDSPPDTCSSRLSLTPTLSNAESDIVSLTFSEIDSELSSLNEPARHVMISSFKLRYTAIQALPQKLSWMREDRTPRQPPPVPPPRPKRAAKLSRLANQLNELRRHATISSVQAEVHYNSGFTPEAELNERGSILRKPPPVPPLRPKQTTNLSRLANQLSMPITFGDFAEGELDRLLTPSPTPTFGDFSQEEMDRFFGNRQYXLTGVGGYIFSSDTGPGHLQQKSVIQNSTTEILIERSRLEKIHAPVLDLQKEEMLKCRYQMSPTVANKSRYQSRKVENMKAVTTGRLLDGLKMYVTPDVEAECYKYTYPKPMYSASVPDRFVSPEVAVAVCNNFFHENYPTVASYQITDEYDAYLDMVEGSVSCLDTATFCPAKLRSFPKTHSYLEPTLRSAVPSAFQNTLQNVLSAATKRNCNVTQMRELPVLDSAVFNVECFKKYACNTDYWEEFKEKPIRITTECVTSYVARLKGPEAAALFAKTHQLVPLQEVPMDRFVMDMKRDVKVTPGTKHTEERPKVQVIQAAEPLATAYLCGIHRELVRRLTAVLLPNIHTLFDMSAEDFDAIIAANFSYVHPVLETDIGSFDKSQDDSLALTALMILEDLGVDDRLMDLIECAFGEITSVHLPTATTFKFGAMMKSGMFLTLFVNTVLNVVIASRVLEQRLRDSKCAAFIGDDNIIHGVVSDKIMADRCATWMNMEVKIIDAVIGIKAPYFCGGFILEDQVTHTACRVSDPLKRLFKLGKPLPVDDEQDHDRRRALEDETRAWFRVGIQGELLKAVESRYEVQEVQPVLLALATFSRSDKAFKALRGSPRHLYGGPK.

One can recognise an Alphavirus-like MT domain in the interval 30–260 (VAQQVTPNDH…ENRADLQSWH (231 aa)). Positions 245–264 (GSTLYPENRADLQSWHLPSV) are nsP1 membrane-binding. Residue cysteine 420 is the site of S-palmitoyl cysteine; by host attachment. The 156-residue stretch at 694–849 (ELTNPPYHEL…RDLCTSTHYK (156 aa)) folds into the (+)RNA virus helicase ATP-binding domain. 725–732 (GTPGSGKS) contributes to the a ribonucleoside 5'-triphosphate binding site. Positions 850 to 998 (YISRRCTQPV…LEEWQAEHED (149 aa)) constitute a (+)RNA virus helicase C-terminal domain. The region spanning 1011–1339 (DPFASKVNTC…LAVSNIFDNY (329 aa)) is the Peptidase C9 domain. Residues 1012–1031 (PFASKVNTCWAKAIIPILRT) form a nucleolus localization signal region. The active-site For cysteine protease nsP2 activity is cysteine 1020. The Nuclear export signal motif lies at 1065–1074 (TKMFGMDLSS). The active-site For cysteine protease nsP2 activity is histidine 1097. The short motif at 1194–1198 (VSKRI) is the Nuclear localization signal element. The Macro domain maps to 1346 to 1505 (APSYRVKRMN…RIADAIRMRE (160 aa)). 5 residues coordinate ADP-D-ribose: asparagine 1369, glycine 1377, glycine 1457, isoleucine 1458, and tyrosine 1459. Residues cysteine 1608, cysteine 1610, cysteine 1633, and cysteine 1651 each contribute to the Zn(2+) site. Short sequence motifs (FGDF; binding to host G3BP1) lie at residues 1845–1848 (FGDF) and 1865–1868 (FGDF). One can recognise a RdRp catalytic domain in the interval 2253–2368 (HPVLETDIGS…HGVVSDKIMA (116 aa)).

Interacts with non-structural protein 3. Interacts with RNA-directed RNA polymerase nsP4. Interacts with protease nsP2. interacts with itself. As to quaternary structure, interacts with mRNA-capping enzyme nsP1. Interacts with host DDX1. Interacts with host DDX3. Interacts (via C-terminus) with host G3BP1; this interaction inhibits the formation of host stress granules on viral mRNAs and the nsp3-G3BP1 complexes bind viral RNAs and probably orchestrate the assembly of viral replication complexes. Interacts (via C-terminus) with host G3BP2; this interaction inhibits the formation of host stress granules on viral mRNAs and the nsp3-G3BP2 complexes bind viral RNAs and probably orchestrate the assembly of viral replication complexes. In terms of assembly, interacts with mRNA-capping enzyme nsP1. Interacts with protease nsP2. interacts with itself. Interacts with RNA-directed RNA polymerase nsP4. Interacts with mRNA-capping enzyme nsP1. Interacts with KPNA1/karyopherin-alpha1; this interaction probably allows the active transport of protease nsP2 into the host nucleus. Mg(2+) serves as cofactor. Mn(2+) is required as a cofactor. Specific enzymatic cleavages in vivo yield mature proteins. The processing of the polyprotein is temporally regulated. In early stages (1.7 hpi), P1234 is first cleaved in trans through its nsP2 protease activity, releasing P123' and nsP4, which associate to form the early replication complex. At the same time, P1234 is also cut at the nsP1/nsP2 site early in infection but with lower efficiency. After replication of the viral minus-strand RNAs (4 hpi), the polyproteins are cut at the nsP1/nsP2 and nsP2/nsP3 sites very efficiently, preventing accumulation of P123' and P1234 and allowing the formation of the late replication complex. NsP3'/nsP4 site is not cleaved anymore and P34 is produced rather than nsP4. In terms of processing, specific enzymatic cleavages in vivo yield mature proteins. The processing of the polyprotein is temporally regulated. In early stages (1.7 hpi), P123 is cleaved at the nsP1/nsP2 site with low efficiency. After replication of the viral minus-strand RNAs (4 hpi), the polyproteins are cut at the nsP1/nsP2 and nsP2/nsP3 sites very efficiently, preventing accumulation of P123 and allowing the formation of the late replication complex. Post-translationally, specific enzymatic cleavages in vivo yield mature proteins. The processing of the polyprotein is temporally regulated. In early stages (1.7 hpi), P123' is cleaved at the nsP1/nsP2 site with low efficiency. After replication of the viral minus-strand RNAs (4 hpi), the polyproteins are cut at the nsP1/nsP2 and nsP2/nsP3 sites very efficiently, preventing accumulation of P123' and allowing the formation of the late replication complex. Palmitoylated by host palmitoyltransferases ZDHHC2 and ZDHHC19. In terms of processing, phosphorylated by host on serines and threonines. Post-translationally, ubiquitinated; targets the protein for rapid degradation via the ubiquitin system. Nsp4 is present in extremely low quantities due to low frequency of translation through the amber stop-codon and the degradation by the ubiquitin pathway.

It localises to the host cytoplasmic vesicle membrane. The protein resides in the host cell membrane. The protein localises to the host cell projection. It is found in the host filopodium. Its subcellular location is the host nucleus. It localises to the host cytoplasm. The catalysed reaction is GTP + S-adenosyl-L-methionine = N(7)-methyl-GTP + S-adenosyl-L-homocysteine. It catalyses the reaction N(7)-methyl-GTP + L-histidyl-[protein] = N(tele)-(N(7)-methylguanosine 5'-phospho)-L-histidyl-[protein] + diphosphate. It carries out the reaction N(tele)-(N(7)-methylguanosine 5'-phospho)-L-histidyl-[protein] + a 5'-end diphospho-(purine-ribonucleoside) in mRNA + H(+) = a 5'-end (N(7)-methyl 5'-triphosphoguanosine)-(purine-ribonucleoside) in mRNA + L-histidyl-[protein]. The enzyme catalyses a 5'-end triphospho-ribonucleoside in mRNA + H2O = a 5'-end diphospho-ribonucleoside in mRNA + phosphate + H(+). The catalysed reaction is a ribonucleoside 5'-triphosphate + H2O = a ribonucleoside 5'-diphosphate + phosphate + H(+). It catalyses the reaction ATP + H2O = ADP + phosphate + H(+). It carries out the reaction RNA(n) + a ribonucleoside 5'-triphosphate = RNA(n+1) + diphosphate. The enzyme catalyses RNA(n) + ATP = RNA(n)-3'-adenine ribonucleotide + diphosphate. The catalysed reaction is 4-O-(ADP-D-ribosyl)-L-aspartyl-[protein] + H2O = L-aspartyl-[protein] + ADP-D-ribose + H(+). It catalyses the reaction 5-O-(ADP-D-ribosyl)-L-glutamyl-[protein] + H2O = L-glutamyl-[protein] + ADP-D-ribose + H(+). It carries out the reaction ADP-alpha-D-ribose 1''-phosphate + H2O = ADP-D-ribose + phosphate. Its function is as follows. Inactive precursor of the viral replicase, which is activated by cleavages carried out by the viral protease nsP2. The early replication complex formed by the polyprotein P123 and nsP4 synthesizes minus-strand RNAs. As soon P123 is cleaved into mature proteins, the plus-strand RNAs synthesis begins. In terms of biological role, the early replication complex formed by the polyprotein P123' and nsP4 synthesizes minus-strand RNAs. Polyprotein P123' is a short-lived polyprotein that accumulates during early stage of infection. As soon P123' is cleaved into mature proteins, the plus-strand RNAs synthesis begins. Functionally, cytoplasmic capping enzyme that catalyzes two virus-specific reactions: methyltransferase and nsP1 guanylyltransferase. mRNA-capping is necessary since all viral RNAs are synthesized in the cytoplasm, and host capping enzymes are restricted to the nucleus. The enzymatic reaction involves a covalent link between 7-methyl-GMP and nsP1, whereas eukaryotic capping enzymes form a covalent complex only with GMP. nsP1 capping consists in the following reactions: GTP is first methylated into 7-methyl-GMP and then is covalently linked to nsP1 to form the m7GMp-nsP1 complex from which 7-methyl-GMP complex is transferred to the mRNA to create the cap structure. NsP1 is needed for the initiation of the minus-strand RNAs synthesis. Probably serves as a membrane anchor for the replication complex composed of nsP1-nsP4. Palmitoylated nsP1 is remodeling host cell cytoskeleton, and induces filopodium-like structure formation at the surface of the host cell. Its function is as follows. Multifunctional protein whose N-terminus is part of the RNA polymerase complex and displays NTPase, RNA triphosphatase and helicase activities. NTPase and RNA triphosphatase are involved in viral RNA capping and helicase keeps a check on the dsRNA replication intermediates. The C-terminus harbors a protease that specifically cleaves the polyproteins and releases the mature proteins. Required for the shutoff of minus-strand RNAs synthesis. Specifically inhibits the host IFN response by promoting the nuclear export of host STAT1. Also inhibits host transcription by inducing rapid proteasome-dependent degradation of POLR2A, a catalytic subunit of the RNAPII complex. The resulting inhibition of cellular protein synthesis serves to ensure maximal viral gene expression and to evade host immune response. Seems to be essential for minus-strand RNAs and subgenomic 26S mRNAs synthesis. Displays mono-ADP-ribosylhydrolase activity. ADP-ribosylation is a post-translational modification that controls various processes of the host cell and the virus probably needs to revert it for optimal viral replication. Binds proteins of FXR family and sequesters them into the viral RNA replication complexes thereby inhibiting the formation of host stress granules on viral mRNAs. The nsp3'-FXR complexes bind viral RNAs and probably orchestrate the assembly of viral replication complexes, thanks to the ability of FXR family members to self-assemble and bind DNA. In terms of biological role, seems to be essential for minus-strand RNAs and subgenomic 26S mRNAs synthesis. Displays mono-ADP-ribosylhydrolase activity. ADP-ribosylation is a post-translantional modification that controls various processes of the host cell and the virus probably needs to revert it for optimal viral replication. Binds proteins of G3BP family and sequesters them into the viral RNA replication complexes thereby inhibiting the formation of host stress granules on viral mRNAs. The nsp3-G3BP complexes bind viral RNAs and probably orchestrate the assembly of viral replication complexes, thanks to the ability of G3BP family members to self-assemble and bind DNA. Functionally, RNA dependent RNA polymerase. Replicates genomic and antigenomic RNA by recognizing replications specific signals. The early replication complex formed by the polyprotein P123 and nsP4 synthesizes minus-strand RNAs. The late replication complex composed of fully processed nsP1-nsP4 is responsible for the production of genomic and subgenomic plus-strand RNAs. The core catalytic domain of nsP4 also possesses terminal adenylyltransferase (TATase) activity that is probably involved in maintenance and repair of the poly(A) tail, an element required for replication of the viral genome. This Aura virus (AURAV) protein is Polyprotein P1234.